Here is a 232-residue protein sequence, read N- to C-terminus: Ornithine carbamoyltransferase (232 aa).

Residues glutamine 15, arginine 39, and 66 to 69 (HPTQ) contribute to the carbamoyl phosphate site. L-ornithine is bound by residues asparagine 99, aspartate 163, and 167 to 168 (SM). Residues 204 to 207 (HCLP) and threonine 232 each bind carbamoyl phosphate.

It belongs to the aspartate/ornithine carbamoyltransferase superfamily. OTCase family.

The protein localises to the cytoplasm. The catalysed reaction is carbamoyl phosphate + L-ornithine = L-citrulline + phosphate + H(+). The protein operates within amino-acid biosynthesis; L-arginine biosynthesis; L-arginine from L-ornithine and carbamoyl phosphate: step 1/3. The sequence is that of Ornithine carbamoyltransferase (argF) from Neisseria animalis.